A 290-amino-acid polypeptide reads, in one-letter code: ATP synthase gamma chain (290 aa).

The protein belongs to the ATPase gamma chain family. In terms of assembly, F-type ATPases have 2 components, CF(1) - the catalytic core - and CF(0) - the membrane proton channel. CF(1) has five subunits: alpha(3), beta(3), gamma(1), delta(1), epsilon(1). CF(0) has three main subunits: a, b and c.

It is found in the cell inner membrane. In terms of biological role, produces ATP from ADP in the presence of a proton gradient across the membrane. The gamma chain is believed to be important in regulating ATPase activity and the flow of protons through the CF(0) complex. The protein is ATP synthase gamma chain of Bradyrhizobium diazoefficiens (strain JCM 10833 / BCRC 13528 / IAM 13628 / NBRC 14792 / USDA 110).